A 424-amino-acid polypeptide reads, in one-letter code: Tubulin-specific chaperone cofactor E-like protein (424 aa).

Residues S18 and S41 each carry the phosphoserine modification. LRR repeat units lie at residues 73 to 98, 99 to 123, 124 to 147, 150 to 172, 173 to 197, 199 to 224, and 226 to 250; these read CAHV…IVSN, VPQL…TCAG, SFSG…HTIL, LPDL…PSVC, CHSL…KLGV, FPSL…SLAR, and FPNL…KLNS. Residues 262–303 form the LRRCT domain; the sequence is IPLLQPYTTEERRKLVVARLPSVSKLNGSVVTDGEREDSERF. Residues 334-424 enclose the Ubiquitin-like domain; it reads AEVDLRPQSS…DKIFVESKTK (91 aa). Residues 350-375 adopt a coiled-coil conformation; sequence FNDQVEEVSIRLDQTVAELKRQLKTL.

It is found in the cytoplasm. The protein localises to the cytoskeleton. In terms of biological role, acts as a regulator of tubulin stability. This Rattus norvegicus (Rat) protein is Tubulin-specific chaperone cofactor E-like protein (Tbcel).